The primary structure comprises 154 residues: Large ribosomal subunit protein bL9c (154 aa).

It belongs to the bacterial ribosomal protein bL9 family.

It localises to the plastid. The protein resides in the chloroplast. Binds to the 23S rRNA. The sequence is that of Large ribosomal subunit protein bL9c from Gracilaria tenuistipitata var. liui (Red alga).